The sequence spans 317 residues: Ribosomal RNA small subunit methyltransferase H (317 aa).

S-adenosyl-L-methionine contacts are provided by residues 30–32, D50, Y78, D95, and Q102; that span reads GGH.

This sequence belongs to the methyltransferase superfamily. RsmH family.

It localises to the cytoplasm. It carries out the reaction cytidine(1402) in 16S rRNA + S-adenosyl-L-methionine = N(4)-methylcytidine(1402) in 16S rRNA + S-adenosyl-L-homocysteine + H(+). Its function is as follows. Specifically methylates the N4 position of cytidine in position 1402 (C1402) of 16S rRNA. This chain is Ribosomal RNA small subunit methyltransferase H, found in Nitrosomonas eutropha (strain DSM 101675 / C91 / Nm57).